The sequence spans 264 residues: Ribosomal RNA small subunit methyltransferase A (264 aa).

Asparagine 12, leucine 14, glycine 39, glutamate 60, aspartate 83, and asparagine 103 together coordinate S-adenosyl-L-methionine.

This sequence belongs to the class I-like SAM-binding methyltransferase superfamily. rRNA adenine N(6)-methyltransferase family. RsmA subfamily.

It localises to the cytoplasm. It catalyses the reaction adenosine(1518)/adenosine(1519) in 16S rRNA + 4 S-adenosyl-L-methionine = N(6)-dimethyladenosine(1518)/N(6)-dimethyladenosine(1519) in 16S rRNA + 4 S-adenosyl-L-homocysteine + 4 H(+). Functionally, specifically dimethylates two adjacent adenosines (A1518 and A1519) in the loop of a conserved hairpin near the 3'-end of 16S rRNA in the 30S particle. May play a critical role in biogenesis of 30S subunits. This chain is Ribosomal RNA small subunit methyltransferase A, found in Syntrophotalea carbinolica (strain DSM 2380 / NBRC 103641 / GraBd1) (Pelobacter carbinolicus).